We begin with the raw amino-acid sequence, 204 residues long: Protease (204 aa).

Catalysis depends on residues His54, Asp71, and Cys122.

It belongs to the peptidase C5 family. As to quaternary structure, interacts with protease cofactor pVI-C; this interaction is necessary for protease activation.

The protein resides in the virion. Its subcellular location is the host nucleus. It catalyses the reaction Cleaves proteins of the adenovirus and its host cell at two consensus sites: -Yaa-Xaa-Gly-Gly-|-Xaa- and -Yaa-Xaa-Gly-Xaa-|-Gly- (in which Yaa is Met, Ile or Leu, and Xaa is any amino acid).. Its activity is regulated as follows. Requires DNA and protease cofactor for maximal activation. Inside nascent virions, becomes partially activated by binding to the viral DNA, allowing it to cleave the cofactor that binds to the protease and fully activates it. Actin, like the viral protease cofactor, seems to act as a cofactor in the cleavage of cytokeratin 18 and of actin itself. Its function is as follows. Cleaves viral precursor proteins (pTP, pIIIa, pVI, pVII, pVIII, and pX) inside newly assembled particles giving rise to mature virions. Protease complexed to its cofactor slides along the viral DNA to specifically locate and cleave the viral precursors. Mature virions have a weakened organization compared to the unmature virions, thereby facilitating subsequent uncoating. Without maturation, the particle lacks infectivity and is unable to uncoat. Late in adenovirus infection, in the cytoplasm, may participate in the cytoskeleton destruction. Cleaves host cell cytoskeletal keratins K7 and K18. This Bos taurus (Bovine) protein is Protease.